Here is a 403-residue protein sequence, read N- to C-terminus: Glucose-signaling factor 2 (403 aa).

Residues 1-177 are Lumenal-facing; that stretch reads MEIYIRLNAD…QEVQANYSSL (177 aa). Residues Asn89 and Asn173 are each glycosylated (N-linked (GlcNAc...) asparagine). The helical; Signal-anchor for type II membrane protein transmembrane segment at 178-198 threads the bilayer; it reads VAQWLFFVMHIFKVGIITLFL. Residues 199-403 lie on the Cytoplasmic side of the membrane; that stretch reads KLGIANPISF…IKKNDLKKSN (205 aa). A coiled-coil region spans residues 330-388; that stretch reads ELENNLKKILEEYDGDIGKMNAEIRRFRRFGIYEPDEKLASLVKLRREIADEKEKASNN.

The protein resides in the endoplasmic reticulum membrane. Functionally, may be involved in the secretion of hexose transporters from the endoplasmic reticulum. Involved in secretion of GAL2 and HXT1. This chain is Glucose-signaling factor 2 (GSF2), found in Saccharomyces cerevisiae (strain ATCC 204508 / S288c) (Baker's yeast).